Reading from the N-terminus, the 78-residue chain is Large ribosomal subunit protein bL28 (78 aa).

Belongs to the bacterial ribosomal protein bL28 family.

This Leifsonia xyli subsp. xyli (strain CTCB07) protein is Large ribosomal subunit protein bL28.